Reading from the N-terminus, the 218-residue chain is Riboflavin kinase (218 aa).

The interval 1–27 is disordered; that stretch reads MRPDGPRDPVAGPDSGPEPPYPVRLSG. Residues Thr-44 and Asn-46 each contribute to the Mg(2+) site. The Nucleophile role is filled by Glu-120.

The protein belongs to the flavokinase family. Zn(2+) serves as cofactor. It depends on Mg(2+) as a cofactor.

It carries out the reaction riboflavin + ATP = FMN + ADP + H(+). Its pathway is cofactor biosynthesis; FMN biosynthesis; FMN from riboflavin (ATP route): step 1/1. In terms of biological role, catalyzes the phosphorylation of riboflavin (vitamin B2) to form flavin mononucleotide (FMN) coenzyme. This chain is Riboflavin kinase (fmn1), found in Neosartorya fischeri (strain ATCC 1020 / DSM 3700 / CBS 544.65 / FGSC A1164 / JCM 1740 / NRRL 181 / WB 181) (Aspergillus fischerianus).